A 1051-amino-acid polypeptide reads, in one-letter code: Carbamoyl phosphate synthase large chain (1051 aa).

Residues M1–D399 are carboxyphosphate synthetic domain. Residues R127, R167, G173, G174, K206, L208, E213, G239, V240, H241, Q282, and E296 each contribute to the ATP site. In terms of domain architecture, ATP-grasp 1 spans R131 to L325. Positions 282, 296, and 298 each coordinate Mg(2+). Positions 282, 296, and 298 each coordinate Mn(2+). The interval I400–L548 is oligomerization domain. The carbamoyl phosphate synthetic domain stretch occupies residues E549–N930. The region spanning S673–F863 is the ATP-grasp 2 domain. 10 residues coordinate ATP: R709, K748, I750, E755, G779, V780, H781, S782, Q822, and E834. The Mg(2+) site is built by Q822, E834, and N836. 3 residues coordinate Mn(2+): Q822, E834, and N836. The 122-residue stretch at N930–I1051 folds into the MGS-like domain. Residues R931–I1051 are allosteric domain.

It belongs to the CarB family. As to quaternary structure, composed of two chains; the small (or glutamine) chain promotes the hydrolysis of glutamine to ammonia, which is used by the large (or ammonia) chain to synthesize carbamoyl phosphate. Tetramer of heterodimers (alpha,beta)4. Mg(2+) serves as cofactor. It depends on Mn(2+) as a cofactor.

The catalysed reaction is hydrogencarbonate + L-glutamine + 2 ATP + H2O = carbamoyl phosphate + L-glutamate + 2 ADP + phosphate + 2 H(+). It carries out the reaction hydrogencarbonate + NH4(+) + 2 ATP = carbamoyl phosphate + 2 ADP + phosphate + 2 H(+). It participates in amino-acid biosynthesis; L-arginine biosynthesis; carbamoyl phosphate from bicarbonate: step 1/1. Its pathway is pyrimidine metabolism; UMP biosynthesis via de novo pathway; (S)-dihydroorotate from bicarbonate: step 1/3. Functionally, large subunit of the glutamine-dependent carbamoyl phosphate synthetase (CPSase). CPSase catalyzes the formation of carbamoyl phosphate from the ammonia moiety of glutamine, carbonate, and phosphate donated by ATP, constituting the first step of 2 biosynthetic pathways, one leading to arginine and/or urea and the other to pyrimidine nucleotides. The large subunit (synthetase) binds the substrates ammonia (free or transferred from glutamine from the small subunit), hydrogencarbonate and ATP and carries out an ATP-coupled ligase reaction, activating hydrogencarbonate by forming carboxy phosphate which reacts with ammonia to form carbamoyl phosphate. This Saccharolobus islandicus (strain L.S.2.15 / Lassen #1) (Sulfolobus islandicus) protein is Carbamoyl phosphate synthase large chain.